We begin with the raw amino-acid sequence, 521 residues long: Ankyrin repeat and death domain-containing protein 1B (521 aa).

10 ANK repeats span residues A60–A89, M93–V122, H126–A155, E159–Q190, R194–E223, D227–E256, L260–Q289, S293–V322, R326–I355, and Q359–W388. The region spanning T420 to K508 is the Death domain.

The polypeptide is Ankyrin repeat and death domain-containing protein 1B (Ankdd1b) (Mus musculus (Mouse)).